Here is a 174-residue protein sequence, read N- to C-terminus: ATP-dependent protease subunit HslV (174 aa).

Residue threonine 2 is part of the active site. 3 residues coordinate Na(+): glycine 159, aspartate 162, and threonine 165.

Belongs to the peptidase T1B family. HslV subfamily. In terms of assembly, a double ring-shaped homohexamer of HslV is capped on each side by a ring-shaped HslU homohexamer. The assembly of the HslU/HslV complex is dependent on binding of ATP.

Its subcellular location is the cytoplasm. The catalysed reaction is ATP-dependent cleavage of peptide bonds with broad specificity.. Allosterically activated by HslU binding. Its function is as follows. Protease subunit of a proteasome-like degradation complex believed to be a general protein degrading machinery. This Lacticaseibacillus casei (strain BL23) (Lactobacillus casei) protein is ATP-dependent protease subunit HslV.